The chain runs to 86 residues: High affinity immunoglobulin epsilon receptor subunit gamma (86 aa).

The first 18 residues, 1–18 (MIPAVVLLLLLLVEQAAA), serve as a signal peptide directing secretion. Topologically, residues 19–23 (LGEPQ) are extracellular. The helical transmembrane segment at 24-44 (LCYILDAILFLYGIVLTLLYC) threads the bilayer. The Cytoplasmic segment spans residues 45–86 (RLKLQVRKAAIDSYEKSDGVYTGLSTRNQETYETLKHEKPPQ). One can recognise an ITAM domain in the interval 54-82 (AIDSYEKSDGVYTGLSTRNQETYETLKHE). Position 65 is a phosphotyrosine (tyrosine 65). Phosphoserine is present on serine 69. At tyrosine 76 the chain carries Phosphotyrosine. Threonine 78 is modified (phosphothreonine).

Belongs to the CD3Z/FCER1G family. IgE Fc receptor is a tetramer of an alpha chain, a beta chain, and two disulfide linked gamma chains. Associates with FCGR1A; forms a functional signaling complex. The signaling subunit of immunoglobulin gamma (IgG) Fc receptor complex. As a homodimer or a heterodimer of CD247 and FCER1G, associates with the ligand binding subunit FCGR3A to form a functional receptor complex. Associates with CLEC6A. Interacts with CLEC4E. Interacts (via ITAM domain) with SYK (via SH2 domains); activates SYK, enabling integrin-mediated activation of neutrophils and macrophages. Interacts with common beta chain of interleukin 3 receptor CSF2RB and recruits SYK in response to IL3 stimulation; this interaction is direct. Interacts with CD300LH; the interaction may be indirect. Interacts with CD300LD. Interacts with TARM1.

Its subcellular location is the cell membrane. Functionally, adapter protein containing an immunoreceptor tyrosine-based activation motif (ITAM) that transduces activation signals from various immunoreceptors. As a component of the high-affinity immunoglobulin E (IgE) receptor, mediates allergic inflammatory signaling in mast cells. As a constitutive component of interleukin-3 receptor complex, selectively mediates interleukin 4/IL4 production b basophils priming T-cells toward effector T-helper 2 subset. Associates with pattern recognition receptors CLEC4D and CLEC4E to form a functional signaling complex in myeloid cells. Binding of mycobacterial trehalose 6,6'-dimycolate (TDM) to this receptor complex leads to phosphorylation of ITAM, triggering activation of SYK, CARD9 and NF-kappa-B, consequently driving maturation of antigen-presenting cells and shaping antigen-specific priming of T-cells toward effector T-helper 1 and T-helper 17 cell subtypes. May function cooperatively with other activating receptors. Functionally linked to integrin beta-2/ITGB2-mediated neutrophil activation. Also involved in integrin alpha-2/ITGA2-mediated platelet activation. The chain is High affinity immunoglobulin epsilon receptor subunit gamma (FCER1G) from Sus scrofa (Pig).